Reading from the N-terminus, the 164-residue chain is Putative lung carcinoma-associated protein 10 (164 aa).

A disordered region spans residues 1–164 (MSSCPVHDCP…TQKPQTTVGQ (164 aa)). The segment covering 23-40 (GSRGALRLRGGAPGSAAG) has biased composition (low complexity). A compositionally biased stretch (polar residues) spans 152 to 164 (MQKTQKPQTTVGQ).

The sequence is that of Putative lung carcinoma-associated protein 10 (LCA10) from Homo sapiens (Human).